The sequence spans 701 residues: Aryl hydrocarbon receptor repressor (701 aa).

Residues 25–78 enclose the bHLH domain; that stretch reads TMGAEKSNPSKRHRDRLNTELDHLASLLPFSPDIISKLDKLSVLRLSVSYLRVK. A PAS domain is found at 106–176; sequence PVQEGRLLLE…RQLHWAMDPP (71 aa). Polar residues predominate over residues 409–430; it reads TEQRSQESTTKLTRQPSKNEPS. Residues 409 to 432 are disordered; it reads TEQRSQESTTKLTRQPSKNEPSTC. A needed for transcriptional repression region spans residues 555 to 701; that stretch reads ASTTSCLWLG…SKGSDGIFLP (147 aa). Glycyl lysine isopeptide (Lys-Gly) (interchain with G-Cter in SUMO2) cross-links involve residues K583 and K660.

In terms of assembly, interacts with ARNT, ANKRA2, HDAC4 and HDAC5. Interacts with ARNT; forms a heterodimer with ARNT.

The protein resides in the cytoplasm. It localises to the nucleus. In terms of biological role, mediates dioxin toxicity and is involved in regulation of cell growth and differentiation. Represses the transcription activity of AHR by competing with this transcription factor for heterodimer formation with the ARNT and subsequently binding to the xenobiotic response element (XRE) sequence present in the promoter regulatory region of variety of genes. Represses CYP1A1 by binding the XRE sequence and recruiting ANKRA2, HDAC4 and/or HDAC5. Autoregulates its expression by associating with its own XRE site. In Mus musculus (Mouse), this protein is Aryl hydrocarbon receptor repressor (Ahrr).